The sequence spans 939 residues: Valine--tRNA ligase (939 aa).

The short motif at 47–57 is the 'HIGH' region element; that stretch reads PNVTGILHMGH. The short motif at 563-567 is the 'KMSKS' region element; it reads KLSKS. Residue lysine 566 coordinates ATP. Positions 874–939 form a coiled coil; sequence EHLAKERVRL…QSILDKLASL (66 aa).

The protein belongs to the class-I aminoacyl-tRNA synthetase family. ValS type 1 subfamily. Monomer.

Its subcellular location is the cytoplasm. It carries out the reaction tRNA(Val) + L-valine + ATP = L-valyl-tRNA(Val) + AMP + diphosphate. Catalyzes the attachment of valine to tRNA(Val). As ValRS can inadvertently accommodate and process structurally similar amino acids such as threonine, to avoid such errors, it has a 'posttransfer' editing activity that hydrolyzes mischarged Thr-tRNA(Val) in a tRNA-dependent manner. The polypeptide is Valine--tRNA ligase (Chlamydia trachomatis serovar A (strain ATCC VR-571B / DSM 19440 / HAR-13)).